Reading from the N-terminus, the 342-residue chain is MLQGYSSVVQALLGTFFTWAMTAAGAALVFIFSSGQRRILDGSLGFAAGVMLAASYWSLLAPAVEMATSSGGFGAFAFFPVAVGFTLGAAFVYLADLLMPHLGATEDPQTALALNLDPALMKKSDPRDPTSLLFPESELSIRIGSTGLLSDKRENGEVYQRKKVAATDLAEGVAPSGSMHGSSGQPGGSSWRRIALLILAITIHNIPEGLAVGVGFGAVEKTASATFESARNLAIGIGIQNFPEGLAVSLPLRGAGFSTWKAFWYGQLSGMVEPLAGVFGAFAVVLAEPILPYALAFAAGAMVYVVMDDIIPEAQISGNGKLASWASILGFVVMMSLDVGLG.

Transmembrane regions (helical) follow at residues 12–32 (LLGT…VFIF), 44–64 (LGFA…APAV), 72–92 (GFGA…AAFV), 194–214 (IALL…AVGV), 263–285 (FWYG…FAVV), 290–307 (ILPY…YVVM), and 322–342 (LASW…VGLG).

It belongs to the ZIP transporter (TC 2.A.5) family. As to expression, highly expressed in the testes and portions of the digestive system including the stomach, ileum and cecum. In contrast, expressed at very low levels in liver, duodenum, jejunum, and colon.

The protein localises to the cell membrane. It localises to the nucleus. Its subcellular location is the cytoplasm. It is found in the golgi apparatus. It catalyses the reaction Zn(2+)(in) = Zn(2+)(out). It carries out the reaction Cu(2+)(in) = Cu(2+)(out). In terms of biological role, zinc importer that regulates cytosolic zinc concentration either via zinc influx from the extracellular compartment or efflux from intracellular organelles such as Golgi apparatus. May transport copper ions as well. The transport mechanism remains to be elucidated. In Mus musculus (Mouse), this protein is Zinc transporter ZIP11 (Slc39a11).